Reading from the N-terminus, the 68-residue chain is Negative regulator of P-body association (68 aa).

Residues 1–68 (MGDQPCASGR…LKSHPPPPEK (68 aa)) are disordered.

As to quaternary structure, interacts with mRNA decapping proteins DCP1A, DCP2 and EDC4.

It is found in the cytoplasm. The protein resides in the P-body. Functionally, promotes dispersal of P-body components and is likely to play a role in the mRNA decapping process. The polypeptide is Negative regulator of P-body association (Homo sapiens (Human)).